The sequence spans 134 residues: Ribosome-binding factor A (134 aa).

This sequence belongs to the RbfA family. Monomer. Binds 30S ribosomal subunits, but not 50S ribosomal subunits or 70S ribosomes.

It is found in the cytoplasm. One of several proteins that assist in the late maturation steps of the functional core of the 30S ribosomal subunit. Associates with free 30S ribosomal subunits (but not with 30S subunits that are part of 70S ribosomes or polysomes). Required for efficient processing of 16S rRNA. May interact with the 5'-terminal helix region of 16S rRNA. This Baumannia cicadellinicola subsp. Homalodisca coagulata protein is Ribosome-binding factor A.